A 419-amino-acid chain; its full sequence is Structure-specific endonuclease subunit slx4 (419 aa).

It belongs to the SLX4 family. Forms a heterodimer with slx1. In terms of processing, phosphorylated in response to DNA damage.

It is found in the nucleus. It localises to the nucleolus. Regulatory subunit of the slx1-slx4 structure-specific endonuclease that resolves DNA secondary structures generated during DNA repair and recombination. Has endonuclease activity towards branched DNA substrates, introducing single-strand cuts in duplex DNA close to junctions with ss-DNA. Has a preference for stem-loop (SL) and splayed arm Y structures. Introduces a single-strand cut in duplex DNA on the 3' side of a double-strand/single-strand junction with respect to the single-strand moving 3' to 5' away from the junction. Plays a critical role in maintaining the integrity of the ribosomal DNA (rDNA) loci, where it has a role in re-starting stalled replication forks. The complex initiates homologous recombination (HR) events, used to maintain rDNA copy number, in the rDNA repeats that are processed by a mechanism that requires rad22, but not rhp51. Has Holliday junction resolvase activity in vitro. Slx4 is required for efficient processing of DNA substrates. In Schizosaccharomyces pombe (strain 972 / ATCC 24843) (Fission yeast), this protein is Structure-specific endonuclease subunit slx4.